The primary structure comprises 121 residues: MTKQQIQGDRAEEIAFQLLQRKGWVLLDRNWSCRWGELDLVLQKDQRLLVVEVKGRTAQRHDRGGLDAFHSHKRRRLARAINCWRSHHPDAGHQLLQVVLALVNLSGSATRVRWLAIHQLS.

This sequence belongs to the UPF0102 family.

The polypeptide is UPF0102 protein Syncc9902_1284 (Synechococcus sp. (strain CC9902)).